The following is a 451-amino-acid chain: Phosphoglucosamine mutase (451 aa).

The Phosphoserine intermediate role is filled by serine 102. Mg(2+) is bound by residues serine 102, aspartate 243, aspartate 245, and aspartate 247. A Phosphoserine modification is found at serine 102.

It belongs to the phosphohexose mutase family. It depends on Mg(2+) as a cofactor. Activated by phosphorylation.

It carries out the reaction alpha-D-glucosamine 1-phosphate = D-glucosamine 6-phosphate. In terms of biological role, catalyzes the conversion of glucosamine-6-phosphate to glucosamine-1-phosphate. In Paramagnetospirillum magneticum (strain ATCC 700264 / AMB-1) (Magnetospirillum magneticum), this protein is Phosphoglucosamine mutase.